A 179-amino-acid chain; its full sequence is ATP-dependent protease subunit HslV (179 aa).

The active site involves Thr7. Gly162, Cys165, and Thr168 together coordinate Na(+).

Belongs to the peptidase T1B family. HslV subfamily. A double ring-shaped homohexamer of HslV is capped on each side by a ring-shaped HslU homohexamer. The assembly of the HslU/HslV complex is dependent on binding of ATP.

The protein resides in the cytoplasm. It carries out the reaction ATP-dependent cleavage of peptide bonds with broad specificity.. With respect to regulation, allosterically activated by HslU binding. Functionally, protease subunit of a proteasome-like degradation complex believed to be a general protein degrading machinery. This is ATP-dependent protease subunit HslV from Bordetella avium (strain 197N).